The sequence spans 130 residues: Small ribosomal subunit protein uS9 (130 aa).

Belongs to the universal ribosomal protein uS9 family.

This Exiguobacterium sp. (strain ATCC BAA-1283 / AT1b) protein is Small ribosomal subunit protein uS9.